The chain runs to 380 residues: Queuine tRNA-ribosyltransferase (380 aa).

Residue Asp96 is the Proton acceptor of the active site. Substrate-binding positions include 96–100 (DSGGF), Asp150, Gln193, and Gly220. Residues 251 to 257 (GVGAPDS) form an RNA binding region. Asp270 (nucleophile) is an active-site residue. The tract at residues 275 to 279 (TRIAR) is RNA binding; important for wobble base 34 recognition. Zn(2+) contacts are provided by Cys308, Cys310, Cys313, and His339.

This sequence belongs to the queuine tRNA-ribosyltransferase family. In terms of assembly, homodimer. Within each dimer, one monomer is responsible for RNA recognition and catalysis, while the other monomer binds to the replacement base PreQ1. Requires Zn(2+) as cofactor.

The enzyme catalyses 7-aminomethyl-7-carbaguanine + guanosine(34) in tRNA = 7-aminomethyl-7-carbaguanosine(34) in tRNA + guanine. It participates in tRNA modification; tRNA-queuosine biosynthesis. In terms of biological role, catalyzes the base-exchange of a guanine (G) residue with the queuine precursor 7-aminomethyl-7-deazaguanine (PreQ1) at position 34 (anticodon wobble position) in tRNAs with GU(N) anticodons (tRNA-Asp, -Asn, -His and -Tyr). Catalysis occurs through a double-displacement mechanism. The nucleophile active site attacks the C1' of nucleotide 34 to detach the guanine base from the RNA, forming a covalent enzyme-RNA intermediate. The proton acceptor active site deprotonates the incoming PreQ1, allowing a nucleophilic attack on the C1' of the ribose to form the product. After dissociation, two additional enzymatic reactions on the tRNA convert PreQ1 to queuine (Q), resulting in the hypermodified nucleoside queuosine (7-(((4,5-cis-dihydroxy-2-cyclopenten-1-yl)amino)methyl)-7-deazaguanosine). In Streptococcus pyogenes serotype M6 (strain ATCC BAA-946 / MGAS10394), this protein is Queuine tRNA-ribosyltransferase.